Here is a 619-residue protein sequence, read N- to C-terminus: Dihydroxy-acid dehydratase (619 aa).

Asp81 is a Mg(2+) binding site. Cys122 lines the [2Fe-2S] cluster pocket. Asp123 and Lys124 together coordinate Mg(2+). At Lys124 the chain carries N6-carboxylysine. Cys201 contacts [2Fe-2S] cluster. A Mg(2+)-binding site is contributed by Glu496. Residue Ser522 is the Proton acceptor of the active site.

Belongs to the IlvD/Edd family. Homodimer. [2Fe-2S] cluster is required as a cofactor. The cofactor is Mg(2+).

The catalysed reaction is (2R)-2,3-dihydroxy-3-methylbutanoate = 3-methyl-2-oxobutanoate + H2O. The enzyme catalyses (2R,3R)-2,3-dihydroxy-3-methylpentanoate = (S)-3-methyl-2-oxopentanoate + H2O. Its pathway is amino-acid biosynthesis; L-isoleucine biosynthesis; L-isoleucine from 2-oxobutanoate: step 3/4. The protein operates within amino-acid biosynthesis; L-valine biosynthesis; L-valine from pyruvate: step 3/4. Functions in the biosynthesis of branched-chain amino acids. Catalyzes the dehydration of (2R,3R)-2,3-dihydroxy-3-methylpentanoate (2,3-dihydroxy-3-methylvalerate) into 2-oxo-3-methylpentanoate (2-oxo-3-methylvalerate) and of (2R)-2,3-dihydroxy-3-methylbutanoate (2,3-dihydroxyisovalerate) into 2-oxo-3-methylbutanoate (2-oxoisovalerate), the penultimate precursor to L-isoleucine and L-valine, respectively. The protein is Dihydroxy-acid dehydratase of Paracidovorax citrulli (strain AAC00-1) (Acidovorax citrulli).